A 127-amino-acid polypeptide reads, in one-letter code: Large ribosomal subunit protein bL20 (127 aa).

It belongs to the bacterial ribosomal protein bL20 family.

Binds directly to 23S ribosomal RNA and is necessary for the in vitro assembly process of the 50S ribosomal subunit. It is not involved in the protein synthesizing functions of that subunit. In Corynebacterium urealyticum (strain ATCC 43042 / DSM 7109), this protein is Large ribosomal subunit protein bL20.